A 309-amino-acid chain; its full sequence is Taste receptor type 2 member 46 (309 aa).

Position 1 (methionine 1) is a topological domain, extracellular. The helical transmembrane segment at 2–22 (ITFLPIIFSILIVVTFVIGNF) threads the bilayer. The Cytoplasmic segment spans residues 23–46 (ANGFIALANSIEWFKRQKISFADQ). The helical transmembrane segment at 47–67 (ILTALAVSRVGLLWVLLLNWY) threads the bilayer. The Extracellular segment spans residues 68 to 86 (ATELNPAFYSIEVRITAYN). A helical membrane pass occupies residues 87–107 (LWAVINHFSNWLATSLSIFYL). Over 108–126 (LKIANFSNLIFLCLKRRVK) the chain is Cytoplasmic. A helical membrane pass occupies residues 127 to 147 (SVVLVILLGPLLFLVCHLFVI). The Extracellular portion of the chain corresponds to 148–178 (NMNQIIWTKEYEGNMTWKIKLRSAMYLSNTT). N-linked (GlcNAc...) asparagine glycosylation is found at asparagine 161 and asparagine 176. Residues 179–199 (VTILANLVPFTLTLISFLLLI) traverse the membrane as a helical segment. At 200–229 (CSLCKHLEKMQLHGKGSQDPSMKVHIKALQ) the chain is on the cytoplasmic side. Residues 230–250 (TVTSFLLLCAIYFLSIIMSVW) form a helical membrane-spanning segment. Over 251–259 (SFESLENKP) the chain is Extracellular. A helical transmembrane segment spans residues 260–280 (VFMFCEAITFSYPSTHPFILI). Residues 281-309 (WGNKKLKQTFLSVLWHVRYWVKGEKPSXP) are Cytoplasmic-facing.

It belongs to the G-protein coupled receptor T2R family.

It is found in the membrane. The protein resides in the cell projection. The protein localises to the cilium membrane. In terms of biological role, receptor that may play a role in the perception of bitterness and is gustducin-linked. May play a role in sensing the chemical composition of the gastrointestinal content. The activity of this receptor may stimulate alpha gustducin, mediate PLC-beta-2 activation and lead to the gating of TRPM5. In airway epithelial cells, binding of bitter compounds increases the intracellular calcium ion concentration and stimulates ciliary beat frequency. The sequence is that of Taste receptor type 2 member 46 (TAS2R46) from Pan troglodytes (Chimpanzee).